A 481-amino-acid chain; its full sequence is G-protein coupled receptor 37-like 1 (481 aa).

An N-terminal signal peptide occupies residues 1-25; that stretch reads MRWLWPLAVSLAVILAVGLSRVSGG. Disordered regions lie at residues 26-58 and 70-108; these read APLH…GVQQ and PIHP…NLTG. Residues 26–134 lie on the Extracellular side of the membrane; that stretch reads APLHLGRHRA…ESSYSAYAIM (109 aa). Thr79 and Thr85 each carry an O-linked (GalNAc...) threonine glycan. Ser86 carries an O-linked (GalNAc...) serine glycan. Residue Thr95 is glycosylated (O-linked (GalNAc...) threonine). The N-linked (GlcNAc...) asparagine glycan is linked to Asn105. Thr107 carries an O-linked (GalNAc...) threonine glycan. A helical membrane pass occupies residues 135–155; it reads LLALVVFAVGIVGNLSVMCIV. Residues 156-167 are Cytoplasmic-facing; it reads WHSYYLKSAWNS. The chain crosses the membrane as a helical span at residues 168–188; it reads ILASLALWDFLVLFFCLPIVI. The Extracellular segment spans residues 189–205; sequence FNEITKQRLLGDVSCRA. Cys203 and Cys286 form a disulfide bridge. A helical transmembrane segment spans residues 206-226; that stretch reads VPFMEVSSLGVTTFSLCALGI. Residues 227-251 lie on the Cytoplasmic side of the membrane; sequence DRFHVATSTLPKVRPIERCQSILAK. A helical membrane pass occupies residues 252–272; sequence LAVIWVGSMTLAVPELLLWQL. The Extracellular portion of the chain corresponds to 273–310; sequence AQEPAPTMGTLDSCIMKPSASLPESLYSLVMTYQNARM. The helical transmembrane segment at 311-331 threads the bilayer; it reads WWYFGCYFCLPILFTVTCQLV. At 332 to 361 the chain is on the cytoplasmic side; the sequence is TWRVRGPPGRKSECRASKHEQCESQLNSTV. The chain crosses the membrane as a helical span at residues 362–382; that stretch reads VGLTVVYAFCTLPENVCNIVV. Residues 383 to 398 are Extracellular-facing; sequence AYLSTELTRQTLDLLG. The helical transmembrane segment at 399–419 threads the bilayer; sequence LINQFSTFFKGAITPVLLLCI. Residues 420 to 481 lie on the Cytoplasmic side of the membrane; the sequence is CRPLGQAFLD…PPLLPLGTPC (62 aa). At Ser471 the chain carries Phosphoserine. A Phosphothreonine modification is found at Thr479.

This sequence belongs to the G-protein coupled receptor 1 family. Interacts with the PTCH1 receptor. O-glycosylated. Post-translationally, undergoes metalloprotease-mediated cleavage which reduces its constitutive activity. In terms of processing, ubiquitinated. As to expression, expressed in primary cortical astrocytes (at protein level). Expressed in the central nervous system.

Its subcellular location is the cell membrane. The protein localises to the cell projection. It is found in the cilium membrane. In terms of biological role, G-protein coupled receptor. Has been shown to bind the neuroprotective and glioprotective factor prosaposin (PSAP), leading to endocytosis followed by an ERK phosphorylation cascade. However, other studies have shown that prosaposin does not increase activity. It has been suggested that GPR37L1 is a constitutively active receptor which signals through the guanine nucleotide-binding protein G(s) subunit alpha. Participates in the regulation of postnatal cerebellar development by modulating the Shh pathway. Regulates baseline blood pressure in females and protects against cardiovascular stress in males. Mediates inhibition of astrocyte glutamate transporters and reduction in neuronal N-methyl-D-aspartate receptor activity. The chain is G-protein coupled receptor 37-like 1 (GPR37L1) from Homo sapiens (Human).